A 511-amino-acid chain; its full sequence is Bifunctional purine biosynthesis protein PurH (511 aa).

Residues 1–146 (MTKRALVSVS…KNHADVTVVV (146 aa)) form the MGS-like domain.

Belongs to the PurH family.

The catalysed reaction is (6R)-10-formyltetrahydrofolate + 5-amino-1-(5-phospho-beta-D-ribosyl)imidazole-4-carboxamide = 5-formamido-1-(5-phospho-D-ribosyl)imidazole-4-carboxamide + (6S)-5,6,7,8-tetrahydrofolate. The enzyme catalyses IMP + H2O = 5-formamido-1-(5-phospho-D-ribosyl)imidazole-4-carboxamide. It participates in purine metabolism; IMP biosynthesis via de novo pathway; 5-formamido-1-(5-phospho-D-ribosyl)imidazole-4-carboxamide from 5-amino-1-(5-phospho-D-ribosyl)imidazole-4-carboxamide (10-formyl THF route): step 1/1. It functions in the pathway purine metabolism; IMP biosynthesis via de novo pathway; IMP from 5-formamido-1-(5-phospho-D-ribosyl)imidazole-4-carboxamide: step 1/1. In Shouchella clausii (strain KSM-K16) (Alkalihalobacillus clausii), this protein is Bifunctional purine biosynthesis protein PurH.